Consider the following 110-residue polypeptide: Late cornified envelope protein 1A (110 aa).

The segment covering 1–10 (MSCQQSQQQC) has biased composition (low complexity). 2 disordered regions span residues 1–23 (MSCQ…CPPK) and 83–110 (QSSG…GGCC). Pro residues predominate over residues 11–23 (QPPPKCTPKCPPK). Low complexity predominate over residues 83-95 (QSSGCCSQPSGGS). Positions 96–110 (SCCGGDSGQHSGGCC) are enriched in gly residues.

The protein belongs to the LCE family. Interacts with CYSRT1. As to expression, skin-specific. Expression was readily detected in adult trunk skin, adult arm skin, fetal skin, penal skin, vulva, esophagus and tongue. Not expressed in the cervix, rectum, lung, colon, or placenta.

Precursors of the cornified envelope of the stratum corneum. This Homo sapiens (Human) protein is Late cornified envelope protein 1A (LCE1A).